The chain runs to 256 residues: Nuclear shuttle protein (256 aa).

The Bipartite nuclear localization signal motif lies at 18–39 (NTTNRFPIRRKYVGGHTRPSVR). Residues 81–96 (SRGPSGDGRSRDYIKL) carry the Nuclear localization signal motif. Residues 150–187 (ELFGAYSACYVNLRLLNNQQHRYRVLHSVKRFVSSAGD) form an interaction with Arabidopsis thaliana NSI protein region.

It belongs to the begomovirus nuclear shuttle protein family. As to quaternary structure, binds to single-stranded and double-stranded viral DNA. Interacts with the host nuclear shuttle interacting (NSI) protein. This interaction may allow NSP to recruit NSI monomers to the viral genome and thus regulate nuclear export of viral genome by NSP.

The protein localises to the host nucleus. It is found in the host cytoplasm. It localises to the host cell membrane. In terms of biological role, binds to the genomic viral ssDNA, shuttles it into and out of the cell nucleus. Begomoviruses use 2 proteins to transport their DNA from cell to cell. The nuclear shuttle protein (NSP) shuttles it between nucleus and cytoplasm and the movement protein (MP) probably transports the DNA-NSP complex to the cell periphery and facilitates movement across the cell wall. The sequence is that of Nuclear shuttle protein from Hewittia sublobata (Coralbush).